A 326-amino-acid polypeptide reads, in one-letter code: Phospho-N-acetylmuramoyl-pentapeptide-transferase (326 aa).

10 consecutive transmembrane segments (helical) span residues 4 to 24 (IWVA…LVIP), 49 to 69 (TPTM…FLLI), 74 to 94 (GLIV…DDYI), 109 to 129 (KLLG…FEAG), 151 to 171 (LGWW…SNAV), 179 to 199 (GLAA…ALAA), 203 to 223 (GVAA…FFNF), 228 to 248 (VFMG…AAVV), 254 to 274 (LFLI…IQVI), and 303 to 323 (VVIT…AGLY).

The protein belongs to the glycosyltransferase 4 family. MraY subfamily. Mg(2+) is required as a cofactor.

The protein localises to the cell membrane. It carries out the reaction UDP-N-acetyl-alpha-D-muramoyl-L-alanyl-gamma-D-glutamyl-meso-2,6-diaminopimeloyl-D-alanyl-D-alanine + di-trans,octa-cis-undecaprenyl phosphate = di-trans,octa-cis-undecaprenyl diphospho-N-acetyl-alpha-D-muramoyl-L-alanyl-D-glutamyl-meso-2,6-diaminopimeloyl-D-alanyl-D-alanine + UMP. The protein operates within cell wall biogenesis; peptidoglycan biosynthesis. In terms of biological role, catalyzes the initial step of the lipid cycle reactions in the biosynthesis of the cell wall peptidoglycan: transfers peptidoglycan precursor phospho-MurNAc-pentapeptide from UDP-MurNAc-pentapeptide onto the lipid carrier undecaprenyl phosphate, yielding undecaprenyl-pyrophosphoryl-MurNAc-pentapeptide, known as lipid I. In Pelotomaculum thermopropionicum (strain DSM 13744 / JCM 10971 / SI), this protein is Phospho-N-acetylmuramoyl-pentapeptide-transferase.